A 444-amino-acid chain; its full sequence is Phosphatidate cytidylyltransferase 2 (444 aa).

The span at 1–38 (MTELRQRVVREDAPPEDKESESEAKLDGETASDSESRA) shows a compositional bias: basic and acidic residues. Residues 1 to 48 (MTELRQRVVREDAPPEDKESESEAKLDGETASDSESRAETAPLPTSVD) form a disordered region. Ser-20 carries the post-translational modification Phosphoserine. Thr-30 carries the post-translational modification Phosphothreonine. Phosphoserine occurs at positions 32, 34, and 36. Position 50 is a phosphothreonine (Thr-50). 6 helical membrane-spanning segments follow: residues 78–98 (MIAF…MIVM), 129–149 (WYFL…DYFF), 165–185 (HRFI…LSLV), 212–232 (LVIH…SCVI), 261–281 (GFIG…YVMS), and 339–359 (IALS…ASGF).

The protein belongs to the CDS family. As to quaternary structure, homodimer. As to expression, ubiquitous. Expressed in the ganglion cell layer and inner nuclear layer of the retina.

It is found in the endoplasmic reticulum membrane. The catalysed reaction is a 1,2-diacyl-sn-glycero-3-phosphate + CTP + H(+) = a CDP-1,2-diacyl-sn-glycerol + diphosphate. It catalyses the reaction 1-octadecanoyl-2-(5Z,8Z,11Z,14Z-eicosatetraenoyl)-sn-glycero-3-phosphate + CTP + H(+) = 1-octadecanoyl-2-(5Z,8Z,11Z,14Z-eicosatetraenoyl)-sn-glycero-3-cytidine-5'-diphosphate + diphosphate. The enzyme catalyses 1-octadecanoyl-2-(9Z,12Z-octadecadienoyl)-sn-glycero-3-phosphate + CTP + H(+) = 1-octadecanoyl-2-(9Z,12Z-octadecadienoyl)-sn-glycero-3-cytidine-5'-diphosphate + diphosphate. It carries out the reaction 1-hexadecanoyl-2-(5Z,8Z,11Z,14Z-eicosatetraenoyl)-sn-glycero-3-phosphate + CTP + H(+) = 1-hexadecanoyl-2-(5Z,8Z,11Z,14Z-eicosatetraenoyl)-sn-glycero-3-cytidine-5'-diphosphate + diphosphate. The catalysed reaction is 1,2-di-(5Z,8Z,11Z,14Z)-eicosatetraenoyl-sn-glycero-3-phosphate + CTP + H(+) = 1,2-di-(5Z,8Z,11Z,14Z-eicosatetraenoyl)-sn-glycero-3-cytidine-5'-diphosphate + diphosphate. It catalyses the reaction 1-octadecanoyl-2-(9Z-octadecenoyl)-sn-glycero-3-phosphate + CTP + H(+) = 1-octadecanoyl-2-(9Z-octadecenoyl)-sn-glycero-3-cytidine-5'-diphosphate + diphosphate. The enzyme catalyses 1-octadecanoyl-2-(4Z,7Z,10Z,13Z,16Z,19Z-docosahexaenoyl)-sn-glycero-3-phosphate + CTP + H(+) = 1-octadecanoyl-2-(4Z,7Z,10Z,13Z,16Z,19Z-docosahexaenoyl)-sn-glycero-3-cytidine-5'-diphosphate + diphosphate. It carries out the reaction 1,2-di-(9Z,12Z-octadecadienoyl)-sn-glycero-3-phosphate + CTP + H(+) = 1,2-di-(9Z,12Z-octadecadienoyl)-sn-glycero-3-cytidine-5'-diphosphate + diphosphate. The catalysed reaction is 1,2-di-(9Z-octadecenoyl)-sn-glycero-3-phosphate + CTP + H(+) = 1,2-di-(9Z-octadecenoyl)-sn-glycero-3-cytidine-5'-diphosphate + diphosphate. The protein operates within phospholipid metabolism; CDP-diacylglycerol biosynthesis; CDP-diacylglycerol from sn-glycerol 3-phosphate: step 3/3. Catalyzes the conversion of phosphatidic acid (PA) to CDP-diacylglycerol (CDP-DAG), an essential intermediate in the synthesis of phosphatidylglycerol, cardiolipin and phosphatidylinositol. Exhibits specificity for the nature of the acyl chains at the sn-1 and sn-2 positions in the substrate, PA and the preferred acyl chain composition is 1-stearoyl-2-arachidonoyl-sn-phosphatidic acid. Plays an important role in regulating the growth and maturation of lipid droplets which are storage organelles at the center of lipid and energy homeostasis. The sequence is that of Phosphatidate cytidylyltransferase 2 from Mus musculus (Mouse).